The following is a 536-amino-acid chain: Arylsulfatase K (536 aa).

Positions 1–22 are cleaved as a signal peptide; sequence MLLLWVSVVAALALAVLAPGAG. Ca(2+) is bound by residues aspartate 40 and cysteine 80. Cysteine 80 (nucleophile) is an active-site residue. Cysteine 80 is modified (3-oxoalanine (Cys)). A glycan (N-linked (GlcNAc...) asparagine) is linked at asparagine 108. Lysine 128 contacts substrate. N-linked (GlcNAc...) asparagine glycans are attached at residues asparagine 166 and asparagine 193. Histidine 251 is a substrate binding site. Asparagine 262 is a glycosylation site (N-linked (GlcNAc...) asparagine). Positions 313 and 314 each coordinate Ca(2+). Asparagine 375, asparagine 413, and asparagine 498 each carry an N-linked (GlcNAc...) asparagine glycan.

It belongs to the sulfatase family. Ca(2+) is required as a cofactor. In terms of processing, the conversion to 3-oxoalanine (also known as C-formylglycine, FGly), of a serine or cysteine residue in prokaryotes and of a cysteine residue in eukaryotes, is critical for catalytic activity. The 75-kDa precursor undergoes proteolytic processing to yield a 23 kDa form. Post-translationally, N-glycosylated with both high mannose and complex type sugars. In terms of tissue distribution, expressed at high levels in the placenta and pancreas. Expressed at intermediate levels in the lung, brain, heart, liver and kidney and at low levels in the muscle.

The protein localises to the secreted. It localises to the lysosome. The enzyme catalyses an aryl sulfate + H2O = a phenol + sulfate + H(+). The catalysed reaction is Hydrolysis of the 2-sulfate groups of the 2-O-sulfo-D-glucuronate residues of chondroitin sulfate, heparin and heparitin sulfate.. In terms of biological role, catalyzes the hydrolysis of pseudosubstrates such as p-nitrocatechol sulfate and p-nitrophenyl sulfate. Catalyzes the hydrolysis of the 2-sulfate groups of the 2-O-sulfo-D-glucuronate residues of chondroitin sulfate, heparin and heparitin sulfate. Acts selectively on 2-sulfoglucuronate and lacks activity against 2-sulfoiduronate. This chain is Arylsulfatase K (ARSK), found in Homo sapiens (Human).